The following is a 230-amino-acid chain: Uracil phosphoribosyltransferase (230 aa).

K38–K42 provides a ligand contact to GTP. 5-phospho-alpha-D-ribose 1-diphosphate-binding positions include R87, R112, and D140–T148. Residues I204 and G209–A211 contribute to the uracil site. D210 is a 5-phospho-alpha-D-ribose 1-diphosphate binding site.

The protein belongs to the UPRTase family. Requires Mg(2+) as cofactor.

The catalysed reaction is UMP + diphosphate = 5-phospho-alpha-D-ribose 1-diphosphate + uracil. The protein operates within pyrimidine metabolism; UMP biosynthesis via salvage pathway; UMP from uracil: step 1/1. Allosterically activated by GTP. Catalyzes the conversion of uracil and 5-phospho-alpha-D-ribose 1-diphosphate (PRPP) to UMP and diphosphate. The chain is Uracil phosphoribosyltransferase from Thermococcus kodakarensis (strain ATCC BAA-918 / JCM 12380 / KOD1) (Pyrococcus kodakaraensis (strain KOD1)).